We begin with the raw amino-acid sequence, 227 residues long: Cytochrome c oxidase subunit 2 (227 aa).

Topologically, residues 1–14 are mitochondrial intermembrane; sequence MAYPFQLGLQDATS. The chain crosses the membrane as a helical span at residues 15 to 45; the sequence is PIMEELLHFHDHALMIVFLISSLVLYIISLM. The Mitochondrial matrix portion of the chain corresponds to 46-59; it reads LTTKLTHTSTMDAQ. Residues 60 to 87 traverse the membrane as a helical segment; it reads EVETVWTILPAIILILIALPSLRILYMM. Topologically, residues 88–227 are mitochondrial intermembrane; the sequence is DEINNPSLTV…YFETWSALMV (140 aa). Cu cation contacts are provided by His161, Cys196, Glu198, Cys200, His204, and Met207. Glu198 serves as a coordination point for Mg(2+). Phosphotyrosine is present on Tyr218.

The protein belongs to the cytochrome c oxidase subunit 2 family. In terms of assembly, component of the cytochrome c oxidase (complex IV, CIV), a multisubunit enzyme composed of 14 subunits. The complex is composed of a catalytic core of 3 subunits MT-CO1, MT-CO2 and MT-CO3, encoded in the mitochondrial DNA, and 11 supernumerary subunits COX4I, COX5A, COX5B, COX6A, COX6B, COX6C, COX7A, COX7B, COX7C, COX8 and NDUFA4, which are encoded in the nuclear genome. The complex exists as a monomer or a dimer and forms supercomplexes (SCs) in the inner mitochondrial membrane with NADH-ubiquinone oxidoreductase (complex I, CI) and ubiquinol-cytochrome c oxidoreductase (cytochrome b-c1 complex, complex III, CIII), resulting in different assemblies (supercomplex SCI(1)III(2)IV(1) and megacomplex MCI(2)III(2)IV(2)). Found in a complex with TMEM177, COA6, COX18, COX20, SCO1 and SCO2. Interacts with TMEM177 in a COX20-dependent manner. Interacts with COX20. Interacts with COX16. Requires Cu cation as cofactor.

The protein localises to the mitochondrion inner membrane. The catalysed reaction is 4 Fe(II)-[cytochrome c] + O2 + 8 H(+)(in) = 4 Fe(III)-[cytochrome c] + 2 H2O + 4 H(+)(out). Component of the cytochrome c oxidase, the last enzyme in the mitochondrial electron transport chain which drives oxidative phosphorylation. The respiratory chain contains 3 multisubunit complexes succinate dehydrogenase (complex II, CII), ubiquinol-cytochrome c oxidoreductase (cytochrome b-c1 complex, complex III, CIII) and cytochrome c oxidase (complex IV, CIV), that cooperate to transfer electrons derived from NADH and succinate to molecular oxygen, creating an electrochemical gradient over the inner membrane that drives transmembrane transport and the ATP synthase. Cytochrome c oxidase is the component of the respiratory chain that catalyzes the reduction of oxygen to water. Electrons originating from reduced cytochrome c in the intermembrane space (IMS) are transferred via the dinuclear copper A center (CU(A)) of subunit 2 and heme A of subunit 1 to the active site in subunit 1, a binuclear center (BNC) formed by heme A3 and copper B (CU(B)). The BNC reduces molecular oxygen to 2 water molecules using 4 electrons from cytochrome c in the IMS and 4 protons from the mitochondrial matrix. The sequence is that of Cytochrome c oxidase subunit 2 (MT-CO2) from Canis aureus (Golden jackal).